Consider the following 204-residue polypeptide: YAFLLLHQHPDILDDLRTEHGQVCGLNRQSILLALQSRPRLLNDLKLTHAVLKETLRLFPMGPVLRKCPRVPSEMIEYEGRTYDIRNHIVAISHNSLHRRPDLFPDPDAFNPYRFLPGAVIPIPADAWRPFEKGNGYCVGQELAMIQMKVMLLLTLTEFDFQPKYARKAARGPDIYGGYAYTTGSGIGPTPAGGLPMRVDKRAK.

C138 contacts heme.

Belongs to the cytochrome P450 family. It depends on heme as a cofactor.

It functions in the pathway secondary metabolite biosynthesis. Functionally, cytochrome P450 monooxygenase; part of the gene cluster that mediates the biosynthesis of the indole diterpenes penitrems. The geranylgeranyl diphosphate (GGPP) synthase penG catalyzes the first step in penitrem biosynthesis via conversion of farnesyl pyrophosphate and isopentyl pyrophosphate into geranylgeranyl pyrophosphate (GGPP). Condensation of indole-3-glycerol phosphate with GGPP by the prenyl transferase penC then forms 3-geranylgeranylindole (3-GGI). Epoxidation by the FAD-dependent monooxygenase penM leads to a epoxidized-GGI that is substrate of the terpene cyclase penB for cyclization to yield paspaline. Paspaline is subsequently converted to 13-desoxypaxilline by the cytochrome P450 monooxygenase penP, the latter being then converted to paxilline by the cytochrome P450 monooxygenase penQ. Paxilline is converted to beta-paxitriol via C-10 ketoreduction by the short-chain dehydrogenase PC-15 which can be monoprenylated at the C-20 by the indole diterpene prenyltransferase penD. A two-step elimination (acetylation and elimination) process performed by the O-acetyltransferase PC-16 and the P.simplicissimum ptmI-ortholog not yet identified in P.crustosum, leads to the production of the prenylated form of penijanthine. The FAD-linked oxidoreductase ptmO then converts the prenylated form of penijanthine into PC-M5 which is in turn transformed into PC-M4 by the aromatic dimethylallyltransferase PC-22. A series of oxidation steps involving 4 cytochrome P450 monooxygenases (PC-21, PC-05, PC-23, PC-20) and a FAD-dependent monooxygenase (PC-14) are required for the transformation of PC-M4 to penitrems A and E. Synthesis of these final products is proposed to proceed via penitrems D and C (PC-21, PC-05, PC-14) and penitrems B and F (PC-21, PC-05, PC-14, PC-23). This is Cytochrome P450 monooxygenase PC-23 from Penicillium crustosum (Blue mold fungus).